Here is a 166-residue protein sequence, read N- to C-terminus: Large ribosomal subunit protein uL10 (166 aa).

This sequence belongs to the universal ribosomal protein uL10 family. Part of the ribosomal stalk of the 50S ribosomal subunit. The N-terminus interacts with L11 and the large rRNA to form the base of the stalk. The C-terminus forms an elongated spine to which L12 dimers bind in a sequential fashion forming a multimeric L10(L12)X complex.

Functionally, forms part of the ribosomal stalk, playing a central role in the interaction of the ribosome with GTP-bound translation factors. The protein is Large ribosomal subunit protein uL10 of Lactobacillus johnsonii (strain CNCM I-12250 / La1 / NCC 533).